Consider the following 688-residue polypeptide: MARKFPLERTRNIGIMAHIDAGKTTTTERILFYTGQTHKIGETHEGASQMDWMEQEKERGITITSAATTASWKDHRINIIDTPGHVDFTVEVERSLRVLDGSVAVFCAKGGVEPQSENVWRQAETYGVPRIAFVNKMDILGADFYNVVSMMKSRLNSNAVPMQLPIGKEDSFIGIIDLLKMDAVIYKDDLGVEMEETDIPEDMKELAAEWREKLVESVAETDEELMMKYLEGEELTIDELKVAIRKATIACEMNPVFCGTAYRNKGVQLVIDAVLDYLPAPTDIPAIKGILADGEEAERHSSDEEPFSALAFKIMTDPFVGKLAFFRVYSGTLESGSYVLNATKNKRERIGRILQMHANTREEITKVYAGDIAAAVGLKDTTTGDTLCDPANPIILESMEFPEPVISVAIEPSSKAAQEKMGIALQKLAEEDPTFTVKTDQETGQTIISGMGELHLEIIVDRLLREFKVEAKVGAPQVAYRETITQPVDVEYKYSKQSGGRGQYGHVKIRVAPQEPGEGYKFTNKTVGGSVPKEYVGPVDMGIQGAMQSGIVAGYPVVDVAVELYDGSYHEVDSSEMAFKMAGSMAFKDAMKKGNAVLLEPYFKVEVVTPEDYMGDVMGDLNSRRGLIQGMEARSGAQVINAFVPLSEMFGYSTDLRSSTQGRATYTMIFDHYEQVPASVAKKIAEGK.

Residues glutamate 8–threonine 282 enclose the tr-type G domain. Residues alanine 17–threonine 24, aspartate 81–histidine 85, and asparagine 135–aspartate 138 each bind GTP.

This sequence belongs to the TRAFAC class translation factor GTPase superfamily. Classic translation factor GTPase family. EF-G/EF-2 subfamily.

The protein localises to the cytoplasm. In terms of biological role, catalyzes the GTP-dependent ribosomal translocation step during translation elongation. During this step, the ribosome changes from the pre-translocational (PRE) to the post-translocational (POST) state as the newly formed A-site-bound peptidyl-tRNA and P-site-bound deacylated tRNA move to the P and E sites, respectively. Catalyzes the coordinated movement of the two tRNA molecules, the mRNA and conformational changes in the ribosome. The polypeptide is Elongation factor G (Clostridioides difficile (strain 630) (Peptoclostridium difficile)).